Consider the following 840-residue polypeptide: Phosphatidylglycerol lysyltransferase (840 aa).

The Cytoplasmic segment spans residues 1–8 (MTQELKSK). The helical transmembrane segment at 9–29 (LLSFFKFIFATALFIFVIFTL) threads the bilayer. At 30–52 (YRELSHINFKETFIQFGKINRLW) the chain is on the extracellular side. A helical membrane pass occupies residues 53-73 (LVLLFAGGGLSLILLSLYDII). At 74-89 (LVKALKLKMPLIRVFR) the chain is on the cytoplasmic side. Residues 90–110 (VSYIINALNSIIGFGGFIGAG) traverse the membrane as a helical segment. Topologically, residues 111–129 (VRAFVYKNYTNDTKKLVQY) are extracellular. A helical transmembrane segment spans residues 130 to 150 (ISIILVSMLTGLSLLSILVVL). The Cytoplasmic portion of the chain corresponds to 151–161 (RIFNASHMIDE). The chain crosses the membrane as a helical span at residues 162 to 182 (ISWVRWILYIVALFLPIFIFY). Over 183-200 (TVARPVDRNNRYMGVYCT) the chain is Extracellular. A helical membrane pass occupies residues 201–221 (VVSCVEWMAAATVLYFAALIV). Topologically, residues 222–229 (DIHISFMT) are cytoplasmic. Residues 230–250 (FVGIFVIAALSGLVSFIPGGF) traverse the membrane as a helical segment. The Extracellular segment spans residues 251–270 (GAFDLVVLLGLKSLGISEEK). The chain crosses the membrane as a helical span at residues 271 to 291 (ILLALVLYRFAYYFVPVMIAL). Topologically, residues 292–337 (ILSSFEFGNTAKKYLDNSKYFIPVKDFTSFLRSYQKDILAKVPSFS) are cytoplasmic. Residues 338–358 (LAILIFLTSIIFFINNLTIVY) form a helical membrane-spanning segment. Topologically, residues 359–366 (DGLYDGNH) are extracellular. Residues 367 to 387 (FAYYIALAIQTSACLLLILNV) form a helical membrane-spanning segment. The Cytoplasmic segment spans residues 388–392 (RGIYK). A helical membrane pass occupies residues 393–413 (GSRRAIIYAFISIILIASATI). At 414–415 (YT) the chain is on the extracellular side. A helical membrane pass occupies residues 416-436 (YASFLLLSWLIIIFVLLILAY). Over 437-450 (QRAQVLKRPLRFKK) the chain is Cytoplasmic. The chain crosses the membrane as a helical span at residues 451-471 (LAFMLLLSIFILYLNHILISG). The Extracellular segment spans residues 472-489 (TLYALDVYHIEIDTSLLR). A helical membrane pass occupies residues 490–510 (YYFWMTIVIIMLLVGVIAWLF). Residues 511–840 (DYKYKRPHHS…LKVMRVIRHK (330 aa)) are Cytoplasmic-facing.

It belongs to the LPG synthase family.

It localises to the cell membrane. It catalyses the reaction L-lysyl-tRNA(Lys) + a 1,2-diacyl-sn-glycero-3-phospho-(1'-sn-glycerol) = a 1,2-diacyl-sn-glycero-3-phospho-1'-(3'-O-L-lysyl)-sn-glycerol + tRNA(Lys). Catalyzes the transfer of a lysyl group from L-lysyl-tRNA(Lys) to membrane-bound phosphatidylglycerol (PG), which produces lysylphosphatidylglycerol (LPG), a major component of the bacterial membrane with a positive net charge. LPG synthesis contributes to bacterial virulence as it is involved in the resistance mechanism against cationic antimicrobial peptides (CAMP) produces by the host's immune system (defensins, cathelicidins) and by the competing microorganisms (bacteriocins). In fact, the modification of anionic phosphatidylglycerol with positively charged L-lysine results in repulsion of the peptides. In Staphylococcus epidermidis (strain ATCC 35984 / DSM 28319 / BCRC 17069 / CCUG 31568 / BM 3577 / RP62A), this protein is Phosphatidylglycerol lysyltransferase (mprF).